An 86-amino-acid polypeptide reads, in one-letter code: Cell division topological specificity factor (86 aa).

This sequence belongs to the MinE family.

Prevents the cell division inhibition by proteins MinC and MinD at internal division sites while permitting inhibition at polar sites. This ensures cell division at the proper site by restricting the formation of a division septum at the midpoint of the long axis of the cell. This is Cell division topological specificity factor from Polaromonas sp. (strain JS666 / ATCC BAA-500).